The chain runs to 317 residues: Melanocyte-stimulating hormone receptor (317 aa).

Topologically, residues 1–37 (MPMQEPQRRLLDPFNSTRTGTPHLKLSANQTGPWCLH) are extracellular. N-linked (GlcNAc...) asparagine glycans are attached at residues N15 and N29. The helical transmembrane segment at 38 to 63 (VSIPDGLFLSLGLVSLVENVLVVISI) threads the bilayer. At 64–72 (AKNRNLHSP) the chain is on the cytoplasmic side. The chain crosses the membrane as a helical span at residues 73 to 93 (MYYFICCLALSDLLVSVSIVL). Residues 94 to 118 (ETTLILVLEAGALATRVTVVQQLDN) are Extracellular-facing. Residues 119–140 (VIDVLICGSMVSSLCFLGAIAV) form a helical membrane-spanning segment. Topologically, residues 141 to 163 (DRYISIFYALRYHSIVTLPRARW) are cytoplasmic. A helical transmembrane segment spans residues 164 to 183 (AIVAIWVASISSSTLFVAYY). Over 184-191 (NHTAVLLC) the chain is Extracellular. Residues 192 to 211 (LVTFFLATLALMAVLYVHML) form a helical membrane-spanning segment. Residues 212–240 (ARAHQHAQAIAQLHKRQHLVHQGFRLKGA) lie on the Cytoplasmic side of the membrane. A helical transmembrane segment spans residues 241–266 (ATLTILLGIFFLCWGPFFLYLTLIVL). The Extracellular segment spans residues 267 to 279 (CPKHPTCSCFFKN). Residues 280 to 300 (LNLFLALIIFNSIVDPLIYAF) form a helical membrane-spanning segment. The Cytoplasmic segment spans residues 301–317 (RSQELRMTLKEVLLCSW). Residue C315 is the site of S-palmitoyl cysteine attachment.

It belongs to the G-protein coupled receptor 1 family. Interacts with MGRN1, but does not undergo MGRN1-mediated ubiquitination; this interaction competes with GNAS-binding and thus inhibits agonist-induced cAMP production. Interacts with OPN3; the interaction results in a decrease in MC1R-mediated cAMP signaling and ultimately a decrease in melanin production in melanocytes.

It is found in the cell membrane. Its function is as follows. Receptor for MSH (alpha, beta and gamma) and ACTH. The activity of this receptor is mediated by G proteins which activate adenylate cyclase. Mediates melanogenesis, the production of eumelanin (black/brown) and phaeomelanin (red/yellow), via regulation of cAMP signaling in melanocytes. In Chaetodipus baileyi (Bailey's pocket mouse), this protein is Melanocyte-stimulating hormone receptor (MC1R).